We begin with the raw amino-acid sequence, 172 residues long: C-phycocyanin beta chain (172 aa).

Residue Asn-72 is modified to N4-methylasparagine. (2R,3E)-phycocyanobilin is bound by residues Cys-82 and Cys-153.

It belongs to the phycobiliprotein family. As to quaternary structure, heterodimer of an alpha and a beta subunit, which further assembles into trimers and the trimers into hexamers. The basic functional unit of phycobiliproteins is a ring-shaped hexamer formed from two back-to-back trimers contacting via the alpha chain subunits. The trimers are composed of alpha/beta subunit heterodimers arranged around a three-fold axis of symmetry. The phycoerythrins also contain a gamma subunit which is located in the center of the hexamer. Contains two covalently linked bilin chromophores.

It is found in the plastid. The protein localises to the chloroplast thylakoid membrane. Its function is as follows. Light-harvesting photosynthetic bile pigment-protein from the phycobiliprotein complex (phycobilisome, PBS). Phycocyanin is the major phycobiliprotein in the PBS rod. In Porphyra purpurea (Red seaweed), this protein is C-phycocyanin beta chain (cpcB).